A 597-amino-acid polypeptide reads, in one-letter code: Aspartate--tRNA ligase (597 aa).

E173 is a binding site for L-aspartate. Residues Q197–K200 form an aspartate region. Residue R219 coordinates L-aspartate. Residues R219–E221 and Q228 each bind ATP. H449 is a binding site for L-aspartate. An ATP-binding site is contributed by E483. R490 lines the L-aspartate pocket. G535–R538 provides a ligand contact to ATP.

Belongs to the class-II aminoacyl-tRNA synthetase family. Type 1 subfamily. In terms of assembly, homodimer.

The protein resides in the cytoplasm. The enzyme catalyses tRNA(Asp) + L-aspartate + ATP = L-aspartyl-tRNA(Asp) + AMP + diphosphate. Catalyzes the attachment of L-aspartate to tRNA(Asp) in a two-step reaction: L-aspartate is first activated by ATP to form Asp-AMP and then transferred to the acceptor end of tRNA(Asp). The chain is Aspartate--tRNA ligase from Shewanella pealeana (strain ATCC 700345 / ANG-SQ1).